A 113-amino-acid chain; its full sequence is UPF0102 protein SUN_0231 (113 aa).

The protein belongs to the UPF0102 family.

This Sulfurovum sp. (strain NBC37-1) protein is UPF0102 protein SUN_0231.